A 310-amino-acid polypeptide reads, in one-letter code: Pirin-like protein At1g50590 (310 aa).

Belongs to the pirin family.

It is found in the nucleus. The sequence is that of Pirin-like protein At1g50590 from Arabidopsis thaliana (Mouse-ear cress).